We begin with the raw amino-acid sequence, 901 residues long: HTH-type transcriptional regulator MalT (901 aa).

39–46 (SPAGYGKT) is an ATP binding site. An HTH luxR-type domain is found at 829 to 894 (ELIRTSPLTQ…AAVQHAQKLL (66 aa)). A DNA-binding region (H-T-H motif) is located at residues 853–872 (NEQIAGELEVAATTIKTHIR).

Belongs to the MalT family. In terms of assembly, monomer in solution. Oligomerizes to an active state in the presence of the positive effectors ATP and maltotriose.

Activated by ATP and maltotriose, which are both required for DNA binding. Its function is as follows. Positively regulates the transcription of the maltose regulon whose gene products are responsible for uptake and catabolism of malto-oligosaccharides. Specifically binds to the promoter region of its target genes, recognizing a short DNA motif called the MalT box. The polypeptide is HTH-type transcriptional regulator MalT (Escherichia coli O127:H6 (strain E2348/69 / EPEC)).